The chain runs to 224 residues: Urease accessory protein UreF (224 aa).

The protein belongs to the UreF family. UreD, UreF and UreG form a complex that acts as a GTP-hydrolysis-dependent molecular chaperone, activating the urease apoprotein by helping to assemble the nickel containing metallocenter of UreC. The UreE protein probably delivers the nickel.

The protein resides in the cytoplasm. Its function is as follows. Required for maturation of urease via the functional incorporation of the urease nickel metallocenter. The protein is Urease accessory protein UreF of Escherichia coli O157:H7.